Reading from the N-terminus, the 208-residue chain is Superoxide dismutase [Mn] 2 (208 aa).

Mn(2+) contacts are provided by histidine 28, histidine 83, aspartate 165, and histidine 169.

The protein belongs to the iron/manganese superoxide dismutase family. As to quaternary structure, homodimer. It depends on Mn(2+) as a cofactor.

It catalyses the reaction 2 superoxide + 2 H(+) = H2O2 + O2. Destroys superoxide anion radicals which are normally produced within the cells and which are toxic to biological systems. The sequence is that of Superoxide dismutase [Mn] 2 (sodA2) from Bacillus cereus (strain ATCC 14579 / DSM 31 / CCUG 7414 / JCM 2152 / NBRC 15305 / NCIMB 9373 / NCTC 2599 / NRRL B-3711).